Here is a 132-residue protein sequence, read N- to C-terminus: uncharacterized protein (132 aa).

3 helical membrane-spanning segments follow: residues 28–48, 59–79, and 106–126; these read LLRL…LIYP, ILPS…LFSY, and LLVA…VIEI.

Its subcellular location is the membrane. This is an uncharacterized protein from Schizosaccharomyces pombe (strain 972 / ATCC 24843) (Fission yeast).